The sequence spans 584 residues: Long-chain-fatty-acid--AMP ligase FadD26 (584 aa).

Belongs to the ATP-dependent AMP-binding enzyme family.

It carries out the reaction holo-[(phenol)carboxyphthiodiolenone synthase] + a long-chain fatty acid + ATP = a long-chain fatty acyl-[(phenol)carboxyphthiodiolenone synthase] + AMP + diphosphate. The catalysed reaction is eicosanoate + holo-[(phenol)carboxyphthiodiolenone synthase] + ATP = icosanoyl-[(phenol)carboxyphthiodiolenone synthase] + AMP + diphosphate. It catalyses the reaction holo-[(phenol)carboxyphthiodiolenone synthase] + docosanoate + ATP = docosanoyl-[(phenol)carboxyphthiodiolenone synthase] + AMP + diphosphate. The protein operates within lipid metabolism; fatty acid biosynthesis. In terms of biological role, catalyzes the activation of long-chain fatty acids as acyl-adenylates (acyl-AMP), which are then transferred to the multifunctional polyketide synthase PpsA for further chain extension. Catalyzes the adenylation of the long-chain fatty acids eicosanoate (C20) or docosanoate (C22), and potentially the very-long-chain fatty acid lignocerate (C24). Involved in the biosynthesis of phthiocerol dimycocerosate (DIM A) and phthiodiolone dimycocerosate (DIM B). In Mycobacterium marinum (strain ATCC BAA-535 / M), this protein is Long-chain-fatty-acid--AMP ligase FadD26.